A 207-amino-acid polypeptide reads, in one-letter code: Large ribosomal subunit protein uL4 (207 aa).

Positions 48 to 89 are disordered; sequence THKVKNRSEVSGGGRKPWRQKGTGRARQGSIRSPQWRGGGTV.

Belongs to the universal ribosomal protein uL4 family. As to quaternary structure, part of the 50S ribosomal subunit.

One of the primary rRNA binding proteins, this protein initially binds near the 5'-end of the 23S rRNA. It is important during the early stages of 50S assembly. It makes multiple contacts with different domains of the 23S rRNA in the assembled 50S subunit and ribosome. In terms of biological role, forms part of the polypeptide exit tunnel. This is Large ribosomal subunit protein uL4 from Bacillus cytotoxicus (strain DSM 22905 / CIP 110041 / 391-98 / NVH 391-98).